Here is a 274-residue protein sequence, read N- to C-terminus: Exosome complex component Rrp42 (274 aa).

This sequence belongs to the RNase PH family. Rrp42 subfamily. In terms of assembly, component of the archaeal exosome complex. Forms a hexameric ring-like arrangement composed of 3 Rrp41-Rrp42 heterodimers. The hexameric ring associates with a trimer of Rrp4 and/or Csl4 subunits.

Its subcellular location is the cytoplasm. Functionally, non-catalytic component of the exosome, which is a complex involved in RNA degradation. Contributes to the structuring of the Rrp41 active site. In Pyrococcus horikoshii (strain ATCC 700860 / DSM 12428 / JCM 9974 / NBRC 100139 / OT-3), this protein is Exosome complex component Rrp42.